The following is a 456-amino-acid chain: Solute carrier family 49 member 4 homolog (456 aa).

Residues 1–29 (MGLEWSSPGERQPLLYPGGPRAPRVFGRR) are Cytoplasmic-facing. A Di-leucine motif; mediates lysosomal localization motif is present at residues 14–15 (LL). Residues 30–50 (WLVLLLFSLLAFLQGLVWNSW) form a helical membrane-spanning segment. Topologically, residues 51 to 67 (GPIQNSARTAYNFSGLD) are lumenal. Asparagine 62 carries an N-linked (GlcNAc...) asparagine glycan. Residues 68-88 (IALLVLWGPIGFLPCFLFMWL) traverse the membrane as a helical segment. The Cytoplasmic portion of the chain corresponds to 89 to 95 (MDNRGLR). The chain crosses the membrane as a helical span at residues 96-116 (VTVLLTALLMVLGAGLRCVPV). Topologically, residues 117–131 (QDLAVRRKLIHGGQL) are lumenal. Residues 132 to 152 (LNGFAGPTVMNAAPFLSTTWF) traverse the membrane as a helical segment. At 153 to 162 (SPDERATATA) the chain is on the cytoplasmic side. Residues 163–183 (IASMLSYLGGACAFLVGPLVV) traverse the membrane as a helical segment. At 184–207 (PAPNSTSGLLLYSGSVGAIRDRIE) the chain is on the lumenal side. N-linked (GlcNAc...) asparagine glycosylation occurs at asparagine 187. A helical membrane pass occupies residues 208–228 (AVMYAEFGIIFVVFAAILAYF). Residues 229–259 (PSRPPVPPSVAAASRRLSYRTSILRLLSNVR) are Cytoplasmic-facing. A helical membrane pass occupies residues 260-280 (FLLIVLAYAIPLGFYAGWSGV). The Lumenal segment spans residues 281–292 (LDLILTPVHVTQ). A helical transmembrane segment spans residues 293–313 (VDAGWVGFWSIVGGCVVGIAV). Over 314 to 326 (GRFADSIRGVLKP) the chain is Cytoplasmic. The chain crosses the membrane as a helical span at residues 327–347 (ILLLLFSGAALSSTWFTLTFL). Residues 348-362 (SNVTHLPLTTATLYT) are Lumenal-facing. Asparagine 349 is a glycosylation site (N-linked (GlcNAc...) asparagine). A helical transmembrane segment spans residues 363–383 (SCILIGVFLSGTVPIFFEMFV). Residues 384 to 392 (ETVYPIPEG) are Cytoplasmic-facing. A helical transmembrane segment spans residues 393 to 413 (ITCGVVTFLSNLFMGVLLLFL). At 414-420 (TLYQTNL) the chain is on the lumenal side. An N-linked (GlcNAc...) asparagine glycan is attached at asparagine 419. A helical membrane pass occupies residues 421–441 (SWLNWCLTGSCFLSLLFIACF). Over 442–456 (RESYDRLYLDVFVSV) the chain is Cytoplasmic.

It belongs to the major facilitator superfamily.

The protein resides in the lysosome membrane. It catalyses the reaction pyridoxine(out) + n H(+)(out) = pyridoxine(in) + n H(+)(in). Functionally, mediates H(+)-dependent pyridoxine transport. The protein is Solute carrier family 49 member 4 homolog (slc49a4) of Xenopus tropicalis (Western clawed frog).